The primary structure comprises 595 residues: UvrABC system protein C (595 aa).

The 78-residue stretch at 17-94 (FEPGCYLMKD…IKQYQPRYNI (78 aa)) folds into the GIY-YIG domain. Residues 199–234 (KTIIKNLESRMQAASENLEFEQAKEYRDLIQNIHNL) form the UVR domain.

This sequence belongs to the UvrC family. Interacts with UvrB in an incision complex.

It localises to the cytoplasm. In terms of biological role, the UvrABC repair system catalyzes the recognition and processing of DNA lesions. UvrC both incises the 5' and 3' sides of the lesion. The N-terminal half is responsible for the 3' incision and the C-terminal half is responsible for the 5' incision. The polypeptide is UvrABC system protein C (Staphylococcus carnosus (strain TM300)).